We begin with the raw amino-acid sequence, 159 residues long: Sulfur carrier protein DsrE2 (159 aa).

Helical transmembrane passes span 21-43 (PFIL…TFYG) and 72-91 (WFPV…TAMM).

It is found in the cell membrane. Its pathway is energy metabolism; sulfur metabolism. Its function is as follows. Sulfur carrier protein probably involved in sulfur trafficking for oxidative dissimilatory sulfur metabolism. May be a component of a cytoplasmic sulfur relay system delivering sulfur to DsrC. Binds sulfur in the presence of sulfide in vitro. This chain is Sulfur carrier protein DsrE2, found in Allochromatium vinosum (strain ATCC 17899 / DSM 180 / NBRC 103801 / NCIMB 10441 / D) (Chromatium vinosum).